We begin with the raw amino-acid sequence, 125 residues long: Secreted RxLR effector protein 22 (125 aa).

Residues 1-26 (MRLIYSALVTAAAMVAISNGSTPARG) form the signal peptide. The disordered stretch occupies residues 21-66 (STPARGNEVETRSLRGGNEVDSSMSDDGERAARGGGRVRSQASGVT). The RxLR-dEER motif lies at 32 to 50 (RSLRGGNEVDSSMSDDGER).

This sequence belongs to the RxLR effector family.

The protein localises to the secreted. The protein resides in the host nucleus. Effector that acts as a broad suppressor of cell death to interrupt plant immunity. Inhibits cell death induced by cell death-inducing proteins, including the PAMP elicitor INF1 from P.infestans. The protein is Secreted RxLR effector protein 22 of Plasmopara viticola (Downy mildew of grapevine).